The primary structure comprises 83 residues: Putative beta-neurotoxin RjAa15f (83 aa).

Positions 1 to 18 (MKILIFIIASFMLIGVEC) are cleaved as a signal peptide. The LCN-type CS-alpha/beta domain occupies 19–82 (KEGYPMGRNG…VWDSSNNKCV (64 aa)). 4 cysteine pairs are disulfide-bonded: cysteine 29–cysteine 81, cysteine 33–cysteine 55, cysteine 40–cysteine 62, and cysteine 44–cysteine 64.

It belongs to the long (4 C-C) scorpion toxin superfamily. Sodium channel inhibitor family. Beta subfamily. As to expression, expressed by the venom gland.

Its subcellular location is the secreted. Its function is as follows. Beta toxins bind voltage-independently at site-4 of sodium channels (Nav) and shift the voltage of activation toward more negative potentials thereby affecting sodium channel activation and promoting spontaneous and repetitive firing. This chain is Putative beta-neurotoxin RjAa15f, found in Rhopalurus junceus (Caribbean blue scorpion).